Here is a 144-residue protein sequence, read N- to C-terminus: Cytochrome c oxidase subunit 4 isoform 1, mitochondrial (144 aa).

Residues 1–73 (SVVKSEDFSL…SFAEMNRGSN (73 aa)) are Mitochondrial matrix-facing. Residue K4 is modified to N6-acetyllysine; alternate. K4 is subject to N6-succinyllysine; alternate. An N6-acetyllysine modification is found at K28. S31 and S33 each carry phosphoserine. N6-acetyllysine; alternate is present on K35. K35 carries the N6-succinyllysine; alternate modification. K42 carries the post-translational modification N6-acetyllysine. The helical transmembrane segment at 74–99 (EWKTVVGGAMFFIGFTALVIMWQKHY) threads the bilayer. The Mitochondrial intermembrane segment spans residues 100-144 (VYGPLPQSFDKEWVAKQTKRMLDMKVNPIQGLASKWDYEKNEWKK).

The protein belongs to the cytochrome c oxidase IV family. Component of the cytochrome c oxidase (complex IV, CIV), a multisubunit enzyme composed of 14 subunits. The complex is composed of a catalytic core of 3 subunits MT-CO1, MT-CO2 and MT-CO3, encoded in the mitochondrial DNA, and 11 supernumerary subunits COX4I, COX5A, COX5B, COX6A, COX6B, COX6C, COX7A, COX7B, COX7C, COX8 and NDUFA4, which are encoded in the nuclear genome. The complex exists as a monomer or a dimer and forms supercomplexes (SCs) in the inner mitochondrial membrane with NADH-ubiquinone oxidoreductase (complex I, CI) and ubiquinol-cytochrome c oxidoreductase (cytochrome b-c1 complex, complex III, CIII), resulting in different assemblies (supercomplex SCI(1)III(2)IV(1) and megacomplex MCI(2)III(2)IV(2)). Interacts with PHB2; the interaction decreases in absence of SPHK2. Interacts with AFG1L. Interacts with ABCB7; this interaction allows the regulation of cellular iron homeostasis and cellular reactive oxygen species (ROS) levels in cardiomyocytes. Interacts with FLVCR2; this interaction occurs in the absence of heme and is disrupted upon heme binding. Interacts with IRGC.

Its subcellular location is the mitochondrion inner membrane. It functions in the pathway energy metabolism; oxidative phosphorylation. Its function is as follows. Component of the cytochrome c oxidase, the last enzyme in the mitochondrial electron transport chain which drives oxidative phosphorylation. The respiratory chain contains 3 multisubunit complexes succinate dehydrogenase (complex II, CII), ubiquinol-cytochrome c oxidoreductase (cytochrome b-c1 complex, complex III, CIII) and cytochrome c oxidase (complex IV, CIV), that cooperate to transfer electrons derived from NADH and succinate to molecular oxygen, creating an electrochemical gradient over the inner membrane that drives transmembrane transport and the ATP synthase. Cytochrome c oxidase is the component of the respiratory chain that catalyzes the reduction of oxygen to water. Electrons originating from reduced cytochrome c in the intermembrane space (IMS) are transferred via the dinuclear copper A center (CU(A)) of subunit 2 and heme A of subunit 1 to the active site in subunit 1, a binuclear center (BNC) formed by heme A3 and copper B (CU(B)). The BNC reduces molecular oxygen to 2 water molecules using 4 electrons from cytochrome c in the IMS and 4 protons from the mitochondrial matrix. The sequence is that of Cytochrome c oxidase subunit 4 isoform 1, mitochondrial (COX4I1) from Gorilla gorilla gorilla (Western lowland gorilla).